A 257-amino-acid polypeptide reads, in one-letter code: Fimbrial assembly protein, serogroup E1 (257 aa).

This Dichelobacter nodosus (Bacteroides nodosus) protein is Fimbrial assembly protein, serogroup E1 (fimB).